Reading from the N-terminus, the 227-residue chain is Uracil-DNA glycosylase (227 aa).

Aspartate 64 functions as the Proton acceptor in the catalytic mechanism.

The protein belongs to the uracil-DNA glycosylase (UDG) superfamily. UNG family.

The protein resides in the cytoplasm. It carries out the reaction Hydrolyzes single-stranded DNA or mismatched double-stranded DNA and polynucleotides, releasing free uracil.. In terms of biological role, excises uracil residues from the DNA which can arise as a result of misincorporation of dUMP residues by DNA polymerase or due to deamination of cytosine. This chain is Uracil-DNA glycosylase, found in Erwinia tasmaniensis (strain DSM 17950 / CFBP 7177 / CIP 109463 / NCPPB 4357 / Et1/99).